Reading from the N-terminus, the 24-residue chain is Chlorate reductase subunit beta (24 aa).

As to quaternary structure, heterotrimer of alpha, beta and gamma subunits. [3Fe-4S] cluster is required as a cofactor. [4Fe-4S] cluster serves as cofactor.

It localises to the cytoplasm. Electron transfer subunit of the chlorate reductase. This is Chlorate reductase subunit beta from Stutzerimonas chloritidismutans (Pseudomonas chloritidismutans).